A 135-amino-acid polypeptide reads, in one-letter code: Cytochrome b5 (135 aa).

The region spanning 4 to 80 (SKVYSLAEVS…MDEMCVGDID (77 aa)) is the Cytochrome b5 heme-binding domain. The heme site is built by His39 and His63. The chain crosses the membrane as a helical span at residues 106–126 (FIIKLLQFLVPLIILGVAVGI).

This sequence belongs to the cytochrome b5 family.

Its subcellular location is the endoplasmic reticulum membrane. The protein resides in the microsome membrane. Membrane bound hemoprotein which function as an electron carrier for several membrane bound oxygenases. The sequence is that of Cytochrome b5 from Cuscuta reflexa (Southern Asian dodder).